Reading from the N-terminus, the 145-residue chain is Large ribosomal subunit protein uL15 (145 aa).

The tract at residues 1-50 is disordered; that stretch reads MLHTIKPVTNARKSTKRLGRGPGSGTGKTSGKGHKGQLARSGKTLRPGFE. Positions 20–30 are enriched in gly residues; sequence RGPGSGTGKTS.

Belongs to the universal ribosomal protein uL15 family. As to quaternary structure, part of the 50S ribosomal subunit.

Functionally, binds to the 23S rRNA. This is Large ribosomal subunit protein uL15 from Aster yellows witches'-broom phytoplasma (strain AYWB).